The following is a 518-amino-acid chain: Glutamate--cysteine ligase (518 aa).

The protein belongs to the glutamate--cysteine ligase type 1 family. Type 1 subfamily.

The enzyme catalyses L-cysteine + L-glutamate + ATP = gamma-L-glutamyl-L-cysteine + ADP + phosphate + H(+). It participates in sulfur metabolism; glutathione biosynthesis; glutathione from L-cysteine and L-glutamate: step 1/2. This is Glutamate--cysteine ligase from Buchnera aphidicola subsp. Acyrthosiphon pisum (strain 5A).